Reading from the N-terminus, the 82-residue chain is uncharacterized protein (82 aa).

3 helical membrane-spanning segments follow: residues 1–21 (MSAS…SVST), 22–42 (VLLG…LAAF), and 62–82 (WRLL…LTLL).

The protein resides in the cell membrane. This is an uncharacterized protein from Stutzerimonas stutzeri (Pseudomonas stutzeri).